The chain runs to 146 residues: Hemoglobin subunit beta (146 aa).

The residue at position 1 (Val-1) is an N-acetylvaline. Residues 2 to 146 (QLSGEEKAAV…VANALAHKYH (145 aa)) enclose the Globin domain. Ser-44 carries the phosphoserine modification. At Lys-59 the chain carries N6-acetyllysine. Position 63 (His-63) interacts with heme b. Lys-82 bears the N6-acetyllysine mark. His-92 is a binding site for heme b. S-nitrosocysteine is present on Cys-93. The residue at position 144 (Lys-144) is an N6-acetyllysine.

The protein belongs to the globin family. As to quaternary structure, heterotetramer of two alpha chains and two beta chains. Red blood cells.

In terms of biological role, involved in oxygen transport from the lung to the various peripheral tissues. This is Hemoglobin subunit beta (HBB) from Equus hemionus kulan (Turkmenian kulan).